A 203-amino-acid polypeptide reads, in one-letter code: Ras-related protein Rab-30 (203 aa).

GTP is bound by residues valine 20, glycine 21, lysine 22, threonine 23, cysteine 24, and threonine 41. Position 23 (threonine 23) interacts with Mg(2+). The segment at 36 to 44 (PGQGATIGV) is switch-I. The Mg(2+) site is built by threonine 41 and aspartate 64. Residues glycine 67, asparagine 122, lysine 123, aspartate 125, alanine 153, and lysine 154 each contribute to the GTP site. Residues 67 to 83 (GQERFRSITQSYYRSAN) form a switch-II region. 2 S-geranylgeranyl cysteine lipidation sites follow: cysteine 199 and cysteine 200. Cysteine 200 bears the Cysteine methyl ester mark. The propeptide at 201 to 203 (NFN) is removed in mature form.

It belongs to the small GTPase superfamily. Rab family. Mg(2+) is required as a cofactor.

The protein resides in the membrane. The protein localises to the golgi apparatus. It localises to the trans-Golgi network membrane. It is found in the cis-Golgi network membrane. Its subcellular location is the golgi apparatus membrane. The protein resides in the cytoplasm. The protein localises to the cytoplasmic vesicle. It localises to the autophagosome membrane. It is found in the autolysosome membrane. It carries out the reaction GTP + H2O = GDP + phosphate + H(+). With respect to regulation, regulated by guanine nucleotide exchange factors (GEFs) which promote the exchange of bound GDP for free GTP. Regulated by GTPase activating proteins (GAPs) which increase the GTP hydrolysis activity. Inhibited by GDP dissociation inhibitors (GDIs). The small GTPases Rab are key regulators of intracellular membrane trafficking, from the formation of transport vesicles to their fusion with membranes. Rabs cycle between an inactive GDP-bound form and an active GTP-bound form that is able to recruit to membranes different sets of downstream effectors directly responsible for vesicle formation, movement, tethering and fusion. RAB30 is required for maintaining the structural integrity of the Golgi apparatus, possibly by mediating interactions with cytoplasmic scaffolding proteins. Facilitates lipid homeostasis during fasting by regulating hepatic protein and lipid trafficking in a PPAR-alpha-dependent manner. Promotes autophagosome biogenesis during bacterial infection such as group A Streptococcus infection. In Bos taurus (Bovine), this protein is Ras-related protein Rab-30 (RAB30).